Here is a 70-residue protein sequence, read N- to C-terminus: DNA-directed RNA polymerase subunit omega (70 aa).

This sequence belongs to the RNA polymerase subunit omega family. As to quaternary structure, the RNAP catalytic core consists of 2 alpha, 1 beta, 1 beta' and 1 omega subunit. When a sigma factor is associated with the core the holoenzyme is formed, which can initiate transcription.

The enzyme catalyses RNA(n) + a ribonucleoside 5'-triphosphate = RNA(n+1) + diphosphate. Promotes RNA polymerase assembly. Latches the N- and C-terminal regions of the beta' subunit thereby facilitating its interaction with the beta and alpha subunits. This Thermoanaerobacter sp. (strain X514) protein is DNA-directed RNA polymerase subunit omega.